The sequence spans 309 residues: MAPKVSDSVEQLRAAGNQNFRNGQYGEASALYERALRLLQARGSADPEEESVLYSNRAACYLKDGNCTDCIKDCTSALALVPFSIKPLLRRASAYEALEKYSLAYVDYKTVLQIDNSVASALEGINRITRALMDSLGPEWRLKLPPIPVVPVSAQKRWSSLPSENHKETAKSKSKETTATKNRVPSAGDVERARVLKEEGNELVKKGNHKKAIEKYSESLLFSSLESATYSNRALCHLVLKQYKEAEKDCTEALKLDGKNVKAFYRRAQAYKALKDYKSSLADISSLLQIEPRNGPAHKLRQEVNQNMN.

Residue Ser8 is modified to Phosphoserine. TPR repeat units follow at residues 9–42 (VEQL…LQAR), 51–84 (SVLY…VPFS), and 86–118 (KPLL…DNSV). Residues 158-187 (WSSLPSENHKETAKSKSKETTATKNRVPSA) form a disordered region. Phosphoserine is present on Ser160. Residues 164 to 178 (ENHKETAKSKSKETT) are compositionally biased toward basic and acidic residues. Ser186 is modified (phosphoserine). TPR repeat units follow at residues 193–226 (ARVL…SSLE), 227–260 (SATY…DGKN), and 262–294 (KAFY…EPRN). Residue Lys197 forms a Glycyl lysine isopeptide (Lys-Gly) (interchain with G-Cter in SUMO2) linkage.

Belongs to the Tom34 family. As to quaternary structure, interacts with HSP90A, VCP, ATP6V1D, KIAA0665, AMPK, and DMAP1 through its TPR repeat.

It is found in the cytoplasm. The protein resides in the mitochondrion outer membrane. Plays a role in the import of cytosolically synthesized preproteins into mitochondria. Binds the mature portion of precursor proteins. Interacts with cellular components, and possesses weak ATPase activity. May be a chaperone-like protein that helps to keep newly synthesized precursors in an unfolded import compatible state. This is Mitochondrial import receptor subunit TOM34 (Tomm34) from Rattus norvegicus (Rat).